A 222-amino-acid chain; its full sequence is uncharacterized protein (222 aa).

This is an uncharacterized protein from Pyrococcus woesei.